A 1368-amino-acid polypeptide reads, in one-letter code: DNA-directed RNA polymerase subunit beta (1368 aa).

Belongs to the RNA polymerase beta chain family. The RNAP catalytic core consists of 2 alpha, 1 beta, 1 beta' and 1 omega subunit. When a sigma factor is associated with the core the holoenzyme is formed, which can initiate transcription.

It carries out the reaction RNA(n) + a ribonucleoside 5'-triphosphate = RNA(n+1) + diphosphate. In terms of biological role, DNA-dependent RNA polymerase catalyzes the transcription of DNA into RNA using the four ribonucleoside triphosphates as substrates. This Paraburkholderia phytofirmans (strain DSM 17436 / LMG 22146 / PsJN) (Burkholderia phytofirmans) protein is DNA-directed RNA polymerase subunit beta.